A 494-amino-acid chain; its full sequence is AAA-ATPase At2g18190 (494 aa).

The chain crosses the membrane as a helical span at residues 13-29 (SSLFTAYASLTGFLMLF). 251–258 (GPPGTGKS) serves as a coordination point for ATP. Residues 459 to 470 (TCRKLDGDDKHN) show a composition bias toward basic and acidic residues. The interval 459-494 (TCRKLDGDDKHNVSSTNDLKKTKKKKKGGKGKAKGN) is disordered. Over residues 479–494 (KTKKKKKGGKGKAKGN) the composition is skewed to basic residues.

This sequence belongs to the AAA ATPase family. BCS1 subfamily. It depends on Mg(2+) as a cofactor.

It localises to the membrane. The catalysed reaction is ATP + H2O = ADP + phosphate + H(+). The sequence is that of AAA-ATPase At2g18190 from Arabidopsis thaliana (Mouse-ear cress).